The primary structure comprises 189 residues: UPF0688 protein C1orf174 homolog (189 aa).

A disordered region spans residues 53 to 137 (QMAGDGGEAK…TTDPSVFFDE (85 aa)). Composition is skewed to basic and acidic residues over residues 59 to 73 (GEAKRLPKRPFHGEV) and 93 to 103 (APGERRGKENS).

It belongs to the UPF0688 family.

The protein localises to the nucleus. The sequence is that of UPF0688 protein C1orf174 homolog from Danio rerio (Zebrafish).